The primary structure comprises 124 residues: MVKLTSIAAGVAAIAAGVAAAPATTTLSPSDERVNLVELGVYVSDIRAHLAEYYMFQAAHPTETYPVEIAEAVFNYGDFTTMLTGIPADQVTRVITGVPWYSTRLRPAISSALSADGIYTAVPN.

The signal sequence occupies residues 1–20; sequence MVKLTSIAAGVAAIAAGVAA.

The protein belongs to the SRP1/TIP1 family. Seripauperin subfamily.

The chain is Seripauperin-17 (PAU17) from Saccharomyces cerevisiae (strain ATCC 204508 / S288c) (Baker's yeast).